The following is a 210-amino-acid chain: Thymidylate kinase (210 aa).

10–17 (GPEGAGKS) serves as a coordination point for ATP.

It belongs to the thymidylate kinase family.

The catalysed reaction is dTMP + ATP = dTDP + ADP. In terms of biological role, phosphorylation of dTMP to form dTDP in both de novo and salvage pathways of dTTP synthesis. The chain is Thymidylate kinase from Ectopseudomonas mendocina (strain ymp) (Pseudomonas mendocina).